The primary structure comprises 123 residues: SGSCTTKTCWTTLPKFREIGYILKEKYNAAVQVEVVRASRLRQPTFLKIKQIRSYQKPMETDLVYIDKSPNYCEEDASTGSVGTQGRLCNRTSLSADGCDMMCCGRGYNTHQYTKVWQCNCKF.

Residue S1 is the site of O-palmitoleoyl serine; by PORCN attachment. A disordered linker region spans residues 33-61 (VEVVRASRLRQPTFLKIKQIRSYQKPMET). A disulfide bond links C89 and C104. An N-linked (GlcNAc...) asparagine glycan is attached at N90.

This sequence belongs to the Wnt family. Palmitoleoylation is required for efficient binding to frizzled receptors. Depalmitoleoylation leads to Wnt signaling pathway inhibition.

It is found in the secreted. The protein resides in the extracellular space. Its subcellular location is the extracellular matrix. Ligand for members of the frizzled family of seven transmembrane receptors that functions in the canonical Wnt/beta-catenin signaling pathway. Required for normal fusion of the chorion and the allantois during placenta development. Required for central nervous system (CNS) angiogenesis and blood-brain barrier regulation. This Sceloporus occidentalis (Western fence lizard) protein is Protein Wnt-7b (WNT-7B).